The following is a 165-amino-acid chain: Endoribonuclease YbeY (165 aa).

Zn(2+) is bound by residues His-130, His-134, and His-140.

The protein belongs to the endoribonuclease YbeY family. The cofactor is Zn(2+).

Its subcellular location is the cytoplasm. Functionally, single strand-specific metallo-endoribonuclease involved in late-stage 70S ribosome quality control and in maturation of the 3' terminus of the 16S rRNA. This Streptococcus sanguinis (strain SK36) protein is Endoribonuclease YbeY.